The sequence spans 108 residues: uncharacterized protein (108 aa).

2 helical membrane-spanning segments follow: residues 5–27 (TVYG…QLEI) and 83–105 (IFLM…LNIF).

The protein localises to the membrane. This is an uncharacterized protein from Schizosaccharomyces pombe (strain 972 / ATCC 24843) (Fission yeast).